A 778-amino-acid polypeptide reads, in one-letter code: Endonuclease MutS2 (778 aa).

Residue 328–335 (GPNTGGKT) participates in ATP binding. The 76-residue stretch at 703 to 778 (LDLRGKRYEE…GSGCTIANLG (76 aa)) folds into the Smr domain.

The protein belongs to the DNA mismatch repair MutS family. MutS2 subfamily. Homodimer. Binds to stalled ribosomes, contacting rRNA.

Functionally, endonuclease that is involved in the suppression of homologous recombination and thus may have a key role in the control of bacterial genetic diversity. Acts as a ribosome collision sensor, splitting the ribosome into its 2 subunits. Detects stalled/collided 70S ribosomes which it binds and splits by an ATP-hydrolysis driven conformational change. Acts upstream of the ribosome quality control system (RQC), a ribosome-associated complex that mediates the extraction of incompletely synthesized nascent chains from stalled ribosomes and their subsequent degradation. Probably generates substrates for RQC. This chain is Endonuclease MutS2, found in Streptococcus equi subsp. zooepidemicus (strain H70).